The primary structure comprises 463 residues: Putative WAS protein family homolog 3 (463 aa).

The tract at residues M1 to Q54 is required for WASH complex assembly. The segment at M1–I165 is WHD1. K218 is covalently cross-linked (Glycyl lysine isopeptide (Lys-Gly) (interchain with G-Cter in ubiquitin)). The interval Q295 to S463 is disordered. The span at T300–P312 shows a compositional bias: pro residues. Residues Q347–S463 are VCA. Positions G359–M381 constitute a WH2 domain. Residues S380–Q396 are compositionally biased toward basic and acidic residues. A compositionally biased stretch (gly residues) spans S422–G434. Over residues A454 to S463 the composition is skewed to acidic residues.

This sequence belongs to the WASH1 family. In terms of assembly, component of the WASH core complex also described as WASH regulatory complex (SHRC) composed of WASH (WASHC1, WASH2P or WASH3P), WASHC2 (WASHC2A or WASHC2C), WASHC3, WASHC4 and WASHC5. The WASH core complex associates with the F-actin-capping protein dimer (formed by CAPZA1, CAPZA2 or CAPZA3 and CAPZB) in a transient or substoichiometric manner which was initially described as WASH complex. Interacts (via WHD1 region) with WASHC2C; the interaction is direct. Interacts with alpha-tubulin. Interacts with BECN1; WASHC1 and AMBRA1 can competitively interact with BECN1. Interacts with BLOC1S2; may associate with the BLOC-1 complex. Interacts with tubulin gamma chain (TUBG1 or TUBG2). Interacts with EXOC1, EXOC4, EXOC8; in MMP14-positive endosomes in breast tumor cells; indicative for an association with the exocyst complex.

Its subcellular location is the early endosome. The protein resides in the early endosome membrane. It is found in the recycling endosome membrane. The protein localises to the cell projection. It localises to the lamellipodium. Its subcellular location is the filopodium. The protein resides in the cytoplasmic vesicle. It is found in the autophagosome. The protein localises to the cytoplasm. It localises to the cytoskeleton. Its subcellular location is the microtubule organizing center. The protein resides in the centrosome. It is found in the centriole. Functionally, acts as a nucleation-promoting factor at the surface of endosomes, where it recruits and activates the Arp2/3 complex to induce actin polymerization, playing a key role in the fission of tubules that serve as transport intermediates during endosome sorting. Involved in endocytic trafficking of EGF. Involved in transferrin receptor recycling. Regulates the trafficking of endosomal alpha5beta1 integrin to the plasma membrane and involved in invasive cell migration. In T-cells involved in endosome-to-membrane recycling of receptors including T-cell receptor (TCR), CD28 and ITGAL; proposed to be implicated in T cell proliferation and effector function. In dendritic cells involved in endosome-to-membrane recycling of major histocompatibility complex (MHC) class II probably involving retromer and subsequently allowing antigen sampling, loading and presentation during T-cell activation. Involved in Arp2/3 complex-dependent actin assembly driving Salmonella typhimurium invasion independent of ruffling. Involved in the exocytosis of MMP14 leading to matrix remodeling during invasive migration and implicating late endosome-to-plasma membrane tubular connections and cooperation with the exocyst complex. Involved in negative regulation of autophagy independently from its role in endosomal sorting by inhibiting BECN1 ubiquitination to inactivate PIK3C3/Vps34 activity. The protein is Putative WAS protein family homolog 3 (WASH3P) of Homo sapiens (Human).